The sequence spans 495 residues: MPMGSLQPLATLYLLGMLVASCLGRLSWYDPDFQARLTRSNSKCQGQLEVYLKDGWHMVCSQSWGRSSKQWEDPSQASKVCQRLNCGVPLSLGPFLVTYTPQSSIICYGQLGSFSNCSHSRNDMCHSLGLTCLEPQKTTPPTTRPPPTTTPEPTAPPRLQLVAQSGGQHCAGVVEFYSGSLGGTISYEAQDKTQDLENFLCNNLQCGSFLKHLPETEAGRAQDPGEPREHQPLPIQWKIQNSSCTSLEHCFRKIKPQKSGRVLALLCSGFQPKVQSRLVGGSSICEGTVEVRQGAQWAALCDSSSARSSLRWEEVCREQQCGSVNSYRVLDAGDPTSRGLFCPHQKLSQCHELWERNSYCKKVFVTCQDPNPAGLAAGTVASIILALVLLVVLLVVCGPLAYKKLVKKFRQKKQRQWIGPTGMNQNMSFHRNHTATVRSHAENPTASHVDNEYSQPPRNSHLSAYPALEGALHRSSMQPDNSSDSDYDLHGAQRL.

Residues 1–24 (MPMGSLQPLATLYLLGMLVASCLG) form the signal peptide. The Extracellular segment spans residues 25–372 (RLSWYDPDFQ…VFVTCQDPNP (348 aa)). The SRCR 1 domain maps to 35–133 (ARLTRSNSKC…MCHSLGLTCL (99 aa)). Cystine bridges form between Cys-44–Cys-86, Cys-60–Cys-125, Cys-81–Cys-132, and Cys-107–Cys-117. The N-linked (GlcNAc...) asparagine glycan is linked to Asn-116. Residues 136–155 (QKTTPPTTRPPPTTTPEPTA) are disordered. A compositionally biased stretch (pro residues) spans 142-155 (TTRPPPTTTPEPTA). 2 consecutive SRCR domains span residues 159–268 (LQLV…LLCS) and 276–368 (SRLV…VTCQ). 6 disulfide bridges follow: Cys-201–Cys-267, Cys-244–Cys-250, Cys-285–Cys-321, Cys-301–Cys-360, Cys-316–Cys-367, and Cys-342–Cys-350. Asn-241 is a glycosylation site (N-linked (GlcNAc...) asparagine). The chain crosses the membrane as a helical span at residues 373–402 (AGLAAGTVASIILALVLLVVLLVVCGPLAY). Over 403 to 495 (KKLVKKFRQK…DYDLHGAQRL (93 aa)) the chain is Cytoplasmic. Disordered stretches follow at residues 436 to 460 (TVRSHAENPTASHVDNEYSQPPRNS) and 473 to 495 (HRSSMQPDNSSDSDYDLHGAQRL). At Ser-439 the chain carries Phosphoserine. Phosphotyrosine is present on Tyr-453. Phosphoserine is present on residues Ser-460, Ser-483, and Ser-485. Residues 475–484 (SSMQPDNSSD) show a composition bias toward polar residues.

In terms of assembly, interacts with CD72/LYB-2. Interacts with PTPN6/SHP-1. Interacts with CBL. Interacts with CD5L. Interacts with CD3Z/CD247. In terms of processing, phosphorylated on serine, threonine and tyrosine residues following TCR stimulation. Phosphorylated by LCK on Tyr-453 and Tyr-487 upon TCR engagement.

It is found in the cell membrane. Lymphoid-specific receptor expressed by all T-cells and in a subset of B-cells known as B1a cells. Plays a role in the regulation of TCR and BCR signaling, thymocyte selection, T-cell effector differentiation and immune tolerance. Acts by interacting with several ligands expressed on B-cells such as CD5L or CD72 and thereby plays an important role in contact-mediated, T-dependent B-cell activation and in the maintenance of regulatory T and B-cell homeostasis. Functions as a negative regulator of TCR signaling during thymocyte development by associating with several signaling proteins including LCK, CD3Z chain, PI3K or CBL. Mechanistically, co-engagement of CD3 with CD5 enhances phosphorylated CBL recruitment leading to increased VAV1 phosphorylation and degradation. Modulates B-cell biology through ERK1/2 activation in a Ca(2+)-dependent pathway via the non-selective Ca(2+) channel TRPC1, leading to IL-10 production. This is T-cell surface glycoprotein CD5 (CD5) from Homo sapiens (Human).